Here is a 613-residue protein sequence, read N- to C-terminus: Dihydroxy-acid dehydratase (613 aa).

Aspartate 81 is a binding site for Mg(2+). Cysteine 122 is a [2Fe-2S] cluster binding site. Mg(2+) contacts are provided by aspartate 123 and lysine 124. Residue lysine 124 is modified to N6-carboxylysine. Cysteine 195 provides a ligand contact to [2Fe-2S] cluster. Glutamate 491 contributes to the Mg(2+) binding site. Serine 517 functions as the Proton acceptor in the catalytic mechanism.

Belongs to the IlvD/Edd family. As to quaternary structure, homodimer. Requires [2Fe-2S] cluster as cofactor. Mg(2+) serves as cofactor.

The enzyme catalyses (2R)-2,3-dihydroxy-3-methylbutanoate = 3-methyl-2-oxobutanoate + H2O. It catalyses the reaction (2R,3R)-2,3-dihydroxy-3-methylpentanoate = (S)-3-methyl-2-oxopentanoate + H2O. It functions in the pathway amino-acid biosynthesis; L-isoleucine biosynthesis; L-isoleucine from 2-oxobutanoate: step 3/4. It participates in amino-acid biosynthesis; L-valine biosynthesis; L-valine from pyruvate: step 3/4. Functions in the biosynthesis of branched-chain amino acids. Catalyzes the dehydration of (2R,3R)-2,3-dihydroxy-3-methylpentanoate (2,3-dihydroxy-3-methylvalerate) into 2-oxo-3-methylpentanoate (2-oxo-3-methylvalerate) and of (2R)-2,3-dihydroxy-3-methylbutanoate (2,3-dihydroxyisovalerate) into 2-oxo-3-methylbutanoate (2-oxoisovalerate), the penultimate precursor to L-isoleucine and L-valine, respectively. The polypeptide is Dihydroxy-acid dehydratase (Nitrobacter hamburgensis (strain DSM 10229 / NCIMB 13809 / X14)).